We begin with the raw amino-acid sequence, 483 residues long: 6-phosphogluconate dehydrogenase, decarboxylating (483 aa).

Residues 10–15 (GLAVMG) and 33–35 (NRT) contribute to the NADP(+) site. Lys38 bears the N6-acetyllysine mark. A Phosphoserine modification is found at Ser57. Lys59 bears the N6-acetyllysine mark. Residues 75–77 (VKA) and Asn103 each bind NADP(+). Residues Asn103 and 129-131 (SGG) each bind substrate. Residue Ser129 is modified to Phosphoserine. Lys184 acts as the Proton acceptor in catalysis. A substrate-binding site is contributed by 187–188 (HN). Glu191 (proton donor) is an active-site residue. Tyr192, Lys261, Arg288, Arg447, and His453 together coordinate substrate. Residue 478–481 (SSSY) coordinates NADP(+).

It belongs to the 6-phosphogluconate dehydrogenase family. In terms of assembly, homodimer.

The protein localises to the cytoplasm. The catalysed reaction is 6-phospho-D-gluconate + NADP(+) = D-ribulose 5-phosphate + CO2 + NADPH. Its pathway is carbohydrate degradation; pentose phosphate pathway; D-ribulose 5-phosphate from D-glucose 6-phosphate (oxidative stage): step 3/3. In terms of biological role, catalyzes the oxidative decarboxylation of 6-phosphogluconate to ribulose 5-phosphate and CO(2), with concomitant reduction of NADP to NADPH. In Mus musculus (Mouse), this protein is 6-phosphogluconate dehydrogenase, decarboxylating (Pgd).